A 255-amino-acid polypeptide reads, in one-letter code: Sugar fermentation stimulation protein homolog (255 aa).

It belongs to the SfsA family.

In Synechococcus sp. (strain WH7803), this protein is Sugar fermentation stimulation protein homolog.